A 447-amino-acid polypeptide reads, in one-letter code: Zinc finger protein ZIC 1 (447 aa).

Residues 225–260 form a C2H2-type 1; atypical zinc finger; that stretch reads LICKWIEPEQLANPKKSCNKTFSTMHELVTHVTVEH. The segment at 269–296 adopts a C2H2-type 2; atypical zinc-finger fold; that stretch reads HICFWEECPREGKPFKAKYKLVNHIRVH. C2H2-type zinc fingers lie at residues 302-326, 332-356, and 362-384; these read FPCPFPGCGKVFARSENLKIHKRTH, FKCEFEGCDRRFANSSDRKKHMHVH, and YLCKMCDKSYTHPSSLRKHMKVH. Residues 375 to 434 form a disordered region; sequence SSLRKHMKVHESSSQGSQPSPAASSGYESSTPPTIVSPTTDNPTTSSMSPSSSAVHHTAG. The segment covering 386–427 has biased composition (low complexity); that stretch reads SSSQGSQPSPAASSGYESSTPPTIVSPTTDNPTTSSMSPSSS.

Belongs to the GLI C2H2-type zinc-finger protein family. As to quaternary structure, interacts (via the C2H2-type domains 3, 4 and 5) with MDFIC (via the C2H2-type domains 3, 4 and 5). Interacts with GLI1; the interaction enhances transcription activation. Interacts with GLI2. Interacts with GLI3; the interaction enhances transcription activation. Expressed in osteoblasts (at protein level). Expressed in the CNS. A high level expression is seen in the cerebellum, while a low level expression is seen in the olfactory bulb, diencephalon, and brainstem. Expressed in lumbar spine and iliac crest.

The protein resides in the nucleus. Its subcellular location is the cytoplasm. In terms of biological role, acts as a transcriptional activator. Involved in neurogenesis. Plays important roles in the early stage of organogenesis of the CNS, as well as during dorsal spinal cord development and maturation of the cerebellum. Involved in the spatial distribution of mossy fiber (MF) neurons within the pontine gray nucleus (PGN). Plays a role in the regulation of MF axon pathway choice. Promotes MF migration towards ipsilaterally-located cerebellar territories. May have a role in shear flow mechanotransduction in osteocytes. Retains nuclear GLI1 and GLI3 in the cytoplasm. Binds to the minimal GLI-consensus sequence 5'-TGGGTGGTC-3'. In Mus musculus (Mouse), this protein is Zinc finger protein ZIC 1 (Zic1).